A 127-amino-acid chain; its full sequence is Small ribosomal subunit protein uS13 (127 aa).

The segment at 92 to 127 is disordered; it reads HRQGLPVRGQRTRTNARTRRGRRLTVAGKKKAPSKK. A compositionally biased stretch (basic residues) spans 101–127; that stretch reads QRTRTNARTRRGRRLTVAGKKKAPSKK.

The protein belongs to the universal ribosomal protein uS13 family. Part of the 30S ribosomal subunit. Forms a loose heterodimer with protein S19. Forms two bridges to the 50S subunit in the 70S ribosome.

In terms of biological role, located at the top of the head of the 30S subunit, it contacts several helices of the 16S rRNA. In the 70S ribosome it contacts the 23S rRNA (bridge B1a) and protein L5 of the 50S subunit (bridge B1b), connecting the 2 subunits; these bridges are implicated in subunit movement. Contacts the tRNAs in the A and P-sites. The chain is Small ribosomal subunit protein uS13 from Gloeothece citriformis (strain PCC 7424) (Cyanothece sp. (strain PCC 7424)).